The sequence spans 163 residues: R-phycoerythrin alpha chain (163 aa).

Positions 82 and 139 each coordinate (2R,3E)-phycoerythrobilin.

Belongs to the phycobiliprotein family. Heterodimer of an alpha and a beta chain. Contains two covalently linked bilin chromophores.

It is found in the plastid. The protein localises to the chloroplast thylakoid membrane. Light-harvesting photosynthetic bile pigment-protein from the phycobiliprotein complex. This Aglaothamnion neglectum (Red alga) protein is R-phycoerythrin alpha chain (cpeA).